Reading from the N-terminus, the 328-residue chain is tRNA uridine(34) hydroxylase (328 aa).

The region spanning 130–224 (LDEDTVVLDT…YGKDPEVQGE (95 aa)) is the Rhodanese domain. The Cysteine persulfide intermediate role is filled by Cys184.

It belongs to the TrhO family.

The enzyme catalyses uridine(34) in tRNA + AH2 + O2 = 5-hydroxyuridine(34) in tRNA + A + H2O. Catalyzes oxygen-dependent 5-hydroxyuridine (ho5U) modification at position 34 in tRNAs. The protein is tRNA uridine(34) hydroxylase of Streptococcus pyogenes serotype M49 (strain NZ131).